We begin with the raw amino-acid sequence, 349 residues long: tRNA pseudouridine synthase D (349 aa).

F27 contributes to the substrate binding site. D80 serves as the catalytic Nucleophile. Residue N129 participates in substrate binding. The TRUD domain occupies G155–L303. Residue F329 coordinates substrate.

This sequence belongs to the pseudouridine synthase TruD family.

It carries out the reaction uridine(13) in tRNA = pseudouridine(13) in tRNA. Responsible for synthesis of pseudouridine from uracil-13 in transfer RNAs. The sequence is that of tRNA pseudouridine synthase D from Cronobacter sakazakii (strain ATCC BAA-894) (Enterobacter sakazakii).